The following is a 681-amino-acid chain: UvrABC system protein B (681 aa).

In terms of domain architecture, Helicase ATP-binding spans 32 to 419; sequence ARLSRGERDV…GGEYVEQVIR (388 aa). An ATP-binding site is contributed by 45–52; sequence GATGTGKS. Positions 98–121 match the Beta-hairpin motif; the sequence is YYDYYQPEAYIAQTDTYIEKDSSI. The 167-residue stretch at 436–602 folds into the Helicase C-terminal domain; it reads QIDDLIHEIK…PLRKKIADIL (167 aa). Positions 607 to 616 are enriched in polar residues; that stretch reads ESKAESTAPS. Residues 607–626 form a disordered region; sequence ESKAESTAPSSDAVVVSKTN. Positions 636–671 constitute a UVR domain; that stretch reads RSLIDDLTTQMGTAARELKFELAGRLRDEIAELKKE.

This sequence belongs to the UvrB family. In terms of assembly, forms a heterotetramer with UvrA during the search for lesions. Interacts with UvrC in an incision complex.

It localises to the cytoplasm. Its function is as follows. The UvrABC repair system catalyzes the recognition and processing of DNA lesions. A damage recognition complex composed of 2 UvrA and 2 UvrB subunits scans DNA for abnormalities. Upon binding of the UvrA(2)B(2) complex to a putative damaged site, the DNA wraps around one UvrB monomer. DNA wrap is dependent on ATP binding by UvrB and probably causes local melting of the DNA helix, facilitating insertion of UvrB beta-hairpin between the DNA strands. Then UvrB probes one DNA strand for the presence of a lesion. If a lesion is found the UvrA subunits dissociate and the UvrB-DNA preincision complex is formed. This complex is subsequently bound by UvrC and the second UvrB is released. If no lesion is found, the DNA wraps around the other UvrB subunit that will check the other stand for damage. This Corynebacterium diphtheriae (strain ATCC 700971 / NCTC 13129 / Biotype gravis) protein is UvrABC system protein B.